Reading from the N-terminus, the 224-residue chain is Tumor protein D52 (224 aa).

Residues serine 36 and serine 40 each carry the phosphoserine modification. Residues 62–114 adopt a coiled-coil conformation; it reads AATISATETLSEEEQEELRRELAKVEEEIQTLSQVLAAKEKHLAEIKRKLGIN. Serine 176 is subject to Phosphoserine. Residues 187–224 form a disordered region; that stretch reads KVGGTKPAGGDFGEVLNSAANASATTTEPLPEKTQESL. The segment covering 203–213 has biased composition (low complexity); sequence NSAANASATTT. The residue at position 223 (serine 223) is a Phosphoserine.

Belongs to the TPD52 family. In terms of assembly, forms a homodimer or heterodimer with other members of the family. All isoforms interact with several 14-3-3 proteins. Isoform 2 is expressed in colon, breast, prostate, pancreas and kidney tumor cell lines. Isoform 2 is expressed at high levels in kidney, prostate, brain, small intestine and pancreas, at moderate levels in placenta and colon, at low levels in lung, liver and heart, and at very low levels in spleen, thymus, peripheral mononuclear blood cells, testis and ovary.

This is Tumor protein D52 (TPD52) from Homo sapiens (Human).